The following is a 680-amino-acid chain: Potassium-transporting ATPase ATP-binding subunit (680 aa).

Transmembrane regions (helical) follow at residues 37 to 57, 69 to 89, 223 to 243, and 257 to 277; these read VIFV…LDVA, IAAW…VAEG, ILLS…WGLA, and ALLV…IGIA. Asp-307 acts as the 4-aspartylphosphate intermediate in catalysis. ATP-binding positions include Asp-344, Glu-348, 375 to 382, and Lys-393; that span reads FTAETRLS. Mg(2+)-binding residues include Asp-516 and Asp-520. Transmembrane regions (helical) follow at residues 586–606, 614–634, and 652–672; these read FAII…LNIM, AILS…PLAL, and LLVY…LIDL.

This sequence belongs to the cation transport ATPase (P-type) (TC 3.A.3) family. Type IA subfamily. In terms of assembly, the system is composed of three essential subunits: KdpA, KdpB and KdpC.

The protein resides in the cell inner membrane. It catalyses the reaction K(+)(out) + ATP + H2O = K(+)(in) + ADP + phosphate + H(+). Functionally, part of the high-affinity ATP-driven potassium transport (or Kdp) system, which catalyzes the hydrolysis of ATP coupled with the electrogenic transport of potassium into the cytoplasm. This subunit is responsible for energy coupling to the transport system and for the release of the potassium ions to the cytoplasm. This is Potassium-transporting ATPase ATP-binding subunit from Rhizobium meliloti (strain 1021) (Ensifer meliloti).